The following is a 701-amino-acid chain: Centrosomal protein of 83 kDa (701 aa).

The segment covering 1–14 has biased composition (polar residues); it reads MVVSTFTDMDTFPN. Residues 1–23 form a disordered region; that stretch reads MVVSTFTDMDTFPNNFPPGGDSG. Coiled-coil stretches lie at residues 40-634 and 665-698; these read LRCE…SLIL and HMQEEQHQRELSLLRKRLEELETTQRKQLEELGS. A Phosphoserine modification is found at serine 698.

Belongs to the CEP83 family. In terms of assembly, interacts with CEP164 and IFT20.

It localises to the cytoplasm. Its subcellular location is the cytoskeleton. The protein localises to the microtubule organizing center. The protein resides in the centrosome. It is found in the centriole. In terms of biological role, component of the distal appendage region of the centriole involved in the initiation of primary cilium assembly. May collaborate with IFT20 in the trafficking of ciliary membrane proteins from the Golgi complex to the cilium during the initiation of primary cilium assembly. This is Centrosomal protein of 83 kDa (CEP83) from Homo sapiens (Human).